The sequence spans 353 residues: CCN family member 3 (353 aa).

The first 26 residues, 1 to 26, serve as a signal peptide directing secretion; sequence MEPGGGHSLPVLLLLLLLLLLRPSEV. One can recognise an IGFBP N-terminal domain in the interval 29–103; sequence REAPCPRPCG…GGGTGICMVL (75 aa). 6 disulfides stabilise this stretch: cysteine 33–cysteine 59, cysteine 37–cysteine 61, cysteine 41–cysteine 62, cysteine 48–cysteine 65, cysteine 73–cysteine 87, and cysteine 79–cysteine 100. In terms of domain architecture, VWFC spans 106–172; sequence DNCVFDGMIY…GECCEKWVCE (67 aa). A TSP type-1 domain is found at 203-248; it reads NCIEQTTEWSACSRSCGMGFSTRVTNRNQQCEMVKQTRLCMMRPCE. Cystine bridges form between cysteine 260/cysteine 297, cysteine 277/cysteine 311, cysteine 288/cysteine 327, cysteine 291/cysteine 329, and cysteine 296/cysteine 333. Residues 260 to 334 form the CTCK domain; that stretch reads CIRTKKSMKA…NTCVCHGNCP (75 aa). Residue asparagine 276 is glycosylated (N-linked (GlcNAc...) asparagine).

Belongs to the CCN family.

It is found in the secreted. It localises to the cytoplasm. Its subcellular location is the cell junction. The protein localises to the gap junction. Its function is as follows. Immediate-early protein likely to play a role in cell growth regulation. This is CCN family member 3 (CCN3) from Coturnix japonica (Japanese quail).